The primary structure comprises 819 residues: Glycine-rich domain-containing protein 1 (819 aa).

In terms of biological role, plays a regulatory role in abscisic acid (ABA) signaling and tolerance to abiotic stress during germination. May be involved in the regulation of the ABI transcriptional factors. The sequence is that of Glycine-rich domain-containing protein 1 from Arabidopsis thaliana (Mouse-ear cress).